The primary structure comprises 767 residues: Protein transport protein Sec23B (767 aa).

Position 2 is an N-acetylalanine (A2). Residues C61, C66, C85, and C88 each coordinate Zn(2+). At K564 the chain carries N6-acetyllysine. Residues 634–720 (PEPVLLDSSS…EHGGSQARFL (87 aa)) form a Gelsolin-like repeat.

It belongs to the SEC23/SEC24 family. SEC23 subfamily. As to quaternary structure, COPII is composed of at least five proteins: the Sec23/24 complex, the Sec13/31 complex and Sar1. Interacts with SAR1A.

Its subcellular location is the cytoplasmic vesicle. It localises to the COPII-coated vesicle membrane. The protein localises to the endoplasmic reticulum membrane. It is found in the cytoplasm. The protein resides in the cytosol. Its function is as follows. Component of the coat protein complex II (COPII) which promotes the formation of transport vesicles from the endoplasmic reticulum (ER). The coat has two main functions, the physical deformation of the endoplasmic reticulum membrane into vesicles and the selection of cargo molecules for their transport to the Golgi complex. In Mus musculus (Mouse), this protein is Protein transport protein Sec23B.